The following is a 163-amino-acid chain: Phosphopantetheine adenylyltransferase (163 aa).

T10 contacts substrate. ATP contacts are provided by residues 10–11 and H18; that span reads TF. K42, L74, and R88 together coordinate substrate. ATP contacts are provided by residues 89 to 91, E99, and 124 to 130; these read GLR and NSFISST.

The protein belongs to the bacterial CoaD family. As to quaternary structure, homohexamer. The cofactor is Mg(2+).

The protein localises to the cytoplasm. The catalysed reaction is (R)-4'-phosphopantetheine + ATP + H(+) = 3'-dephospho-CoA + diphosphate. It functions in the pathway cofactor biosynthesis; coenzyme A biosynthesis; CoA from (R)-pantothenate: step 4/5. Its function is as follows. Reversibly transfers an adenylyl group from ATP to 4'-phosphopantetheine, yielding dephospho-CoA (dPCoA) and pyrophosphate. This is Phosphopantetheine adenylyltransferase from Shewanella sp. (strain MR-4).